Reading from the N-terminus, the 185-residue chain is Protein-lysine palmitoyltransferase CyaC (185 aa).

Active-site residues include His33 and Asp102.

This sequence belongs to the RTX toxin acyltransferase family. Homodimer.

The protein localises to the cytoplasm. The enzyme catalyses hexadecanoyl-[ACP] + L-lysyl-[protein] = N(6)-hexadecanoyl-L-lysyl-[protein] + holo-[ACP] + H(+). It carries out the reaction (9Z)-hexadecenoyl-[ACP] + L-lysyl-[protein] = N(6)-[(9Z)-hexadecenoyl]-L-lysyl-[protein] + holo-[ACP] + H(+). In terms of biological role, protein-lysine palmitoyltransferase that catalyzes palmitoylation of the protoxin (CyaA) at two internal lysine residues, thereby converting it to the active toxin. This Bordetella bronchiseptica (strain ATCC BAA-588 / NCTC 13252 / RB50) (Alcaligenes bronchisepticus) protein is Protein-lysine palmitoyltransferase CyaC.